The following is a 285-amino-acid chain: Mitochondrial substrate carrier family protein L (285 aa).

The Mitochondrial intermembrane segment spans residues M1–N13. 3 Solcar repeats span residues K8–K94, I103–Y185, and M193–F282. Residues F14–L34 traverse the membrane as a helical segment. At K35 to G69 the chain is on the mitochondrial matrix side. Residues V70–I90 form a helical membrane-spanning segment. Residues V91–P102 lie on the Mitochondrial intermembrane side of the membrane. Residues I103–A123 form a helical membrane-spanning segment. At C124–R156 the chain is on the mitochondrial matrix side. A helical transmembrane segment spans residues G157 to G177. The Mitochondrial intermembrane segment spans residues C178 to S198. Residues F199–I219 form a helical membrane-spanning segment. Residues R220–K256 lie on the Mitochondrial matrix side of the membrane. Residues G257 to E277 form a helical membrane-spanning segment. Residues C278–M285 lie on the Mitochondrial intermembrane side of the membrane.

Belongs to the mitochondrial carrier (TC 2.A.29) family.

The protein localises to the mitochondrion inner membrane. Its function is as follows. Mitochondrial solute carriers shuttle metabolites, nucleotides, and cofactors through the mitochondrial inner membrane. This is Mitochondrial substrate carrier family protein L (mcfL) from Dictyostelium discoideum (Social amoeba).